Reading from the N-terminus, the 315-residue chain is Glycine--tRNA ligase alpha subunit (315 aa).

Belongs to the class-II aminoacyl-tRNA synthetase family. In terms of assembly, tetramer of two alpha and two beta subunits.

It localises to the cytoplasm. It catalyses the reaction tRNA(Gly) + glycine + ATP = glycyl-tRNA(Gly) + AMP + diphosphate. The protein is Glycine--tRNA ligase alpha subunit of Ectopseudomonas mendocina (strain ymp) (Pseudomonas mendocina).